A 567-amino-acid chain; its full sequence is Urease subunit alpha (567 aa).

In terms of domain architecture, Urease spans 129 to 567 (GGIDSHIHFI…LPLAQRYFLF (439 aa)). Ni(2+) is bound by residues His134, His136, and Lys217. The residue at position 217 (Lys217) is an N6-carboxylysine. His219 contributes to the substrate binding site. Ni(2+) contacts are provided by His246 and His272. Catalysis depends on His320, which acts as the Proton donor. Residue Asp360 participates in Ni(2+) binding.

This sequence belongs to the metallo-dependent hydrolases superfamily. Urease alpha subunit family. As to quaternary structure, heterotrimer of UreA (gamma), UreB (beta) and UreC (alpha) subunits. Three heterotrimers associate to form the active enzyme. Ni cation serves as cofactor. In terms of processing, carboxylation allows a single lysine to coordinate two nickel ions.

It is found in the cytoplasm. The catalysed reaction is urea + 2 H2O + H(+) = hydrogencarbonate + 2 NH4(+). It participates in nitrogen metabolism; urea degradation; CO(2) and NH(3) from urea (urease route): step 1/1. This Pseudomonas putida (strain W619) protein is Urease subunit alpha.